Reading from the N-terminus, the 330-residue chain is NADH-quinone oxidoreductase subunit H (330 aa).

Helical transmembrane passes span Leu5–Leu25, Ile44–Leu64, Phe78–Ile98, Val122–Ala142, Val156–Ile176, Ile192–Phe212, Met240–Ile260, Phe271–Trp293, and Cys310–Ile330.

Belongs to the complex I subunit 1 family. As to quaternary structure, NDH-1 is composed of 14 different subunits. Subunits NuoA, H, J, K, L, M, N constitute the membrane sector of the complex.

The protein localises to the cell inner membrane. The catalysed reaction is a quinone + NADH + 5 H(+)(in) = a quinol + NAD(+) + 4 H(+)(out). Its function is as follows. NDH-1 shuttles electrons from NADH, via FMN and iron-sulfur (Fe-S) centers, to quinones in the respiratory chain. The immediate electron acceptor for the enzyme in this species is believed to be ubiquinone. Couples the redox reaction to proton translocation (for every two electrons transferred, four hydrogen ions are translocated across the cytoplasmic membrane), and thus conserves the redox energy in a proton gradient. This subunit may bind ubiquinone. In Campylobacter curvus (strain 525.92), this protein is NADH-quinone oxidoreductase subunit H.